Consider the following 354-residue polypeptide: MKKFTLDYLSPRVVFGAGTASALPDEIGRLGARRPLVLSSPEQRELAKDIVRPIGDRVAGYFDGATMHVPVDVIQKAERAFNDTDADSIIAIGGGSTTGLAKILSMNLDVPSLVIPTTYAGSEMTTIWGVTEGGMKRTGRDPKVLPKTVIYDPLLTVDLPLAISVTSALNAIAHAAEGLYSADLNPVLETMCKQGICALFDAIPRLVAKPTDAEARTDALFGAWMCGTALCHLGMGLHHKLCHTLGGTLNLPHAETHAIVLPHALAYNLPYAAPAERLLQEVAGSSDVPSALYDLARNAGAPLSLAEIGMRPEDIPRVRDLALRDQYPNPRPLESDALETLLVNAFRGRRPDFK.

It belongs to the iron-containing alcohol dehydrogenase family. As to quaternary structure, homodimer.

The catalysed reaction is 3-oxoadipate + NAD(+) = maleylacetate + NADH + H(+). It catalyses the reaction 3-oxoadipate + NADP(+) = maleylacetate + NADPH + H(+). The protein operates within aromatic compound metabolism; 3-chlorocatechol degradation. This Cupriavidus pinatubonensis (strain JMP 134 / LMG 1197) (Cupriavidus necator (strain JMP 134)) protein is Maleylacetate reductase 1 (tfdFI).